Here is a 476-residue protein sequence, read N- to C-terminus: Elongation factor Tu, chloroplastic (476 aa).

A chloroplast-targeting transit peptide spans 1–67 (MAISAPAACS…QSTRRSFTVR (67 aa)). The tr-type G domain maps to 77–281 (KPHVNIGTIG…AVDDYIPIPQ (205 aa)). Residues 86–93 (GHVDHGKT) form a G1 region. A GTP-binding site is contributed by 86–93 (GHVDHGKT). Residue Thr94 is modified to Phosphothreonine. Positions 127–131 (GITIN) are G2. The interval 148–151 (DCPG) is G3. GTP is bound by residues 148–152 (DCPGH) and 203–206 (NKED). A G4 region spans residues 203–206 (NKED). Positions 241 to 243 (SAL) are G5.

Belongs to the TRAFAC class translation factor GTPase superfamily. Classic translation factor GTPase family. EF-Tu/EF-1A subfamily. Interacts with PI5K2. Interacts with APD2.

It localises to the plastid. Its subcellular location is the chloroplast. This protein promotes the GTP-dependent binding of aminoacyl-tRNA to the A-site of ribosomes during protein biosynthesis. The polypeptide is Elongation factor Tu, chloroplastic (TUFA) (Arabidopsis thaliana (Mouse-ear cress)).